A 329-amino-acid polypeptide reads, in one-letter code: Ketol-acid reductoisomerase (NADP(+)) (329 aa).

The region spanning 2–181 (MKKYYESDAD…GATRAVVLET (180 aa)) is the KARI N-terminal Rossmann domain. NADP(+) is bound by residues 25–28 (YGSQ), arginine 48, serine 52, and 82–85 (DELQ). The active site involves histidine 107. NADP(+) is bound at residue glycine 133. Residues 182 to 327 (TFREETETDL…KEVRAMMPQF (146 aa)) form the KARI C-terminal knotted domain. Mg(2+) is bound by residues aspartate 190, glutamate 194, glutamate 226, and glutamate 230. Serine 251 contacts substrate.

It belongs to the ketol-acid reductoisomerase family. It depends on Mg(2+) as a cofactor.

It catalyses the reaction (2R)-2,3-dihydroxy-3-methylbutanoate + NADP(+) = (2S)-2-acetolactate + NADPH + H(+). The catalysed reaction is (2R,3R)-2,3-dihydroxy-3-methylpentanoate + NADP(+) = (S)-2-ethyl-2-hydroxy-3-oxobutanoate + NADPH + H(+). It functions in the pathway amino-acid biosynthesis; L-isoleucine biosynthesis; L-isoleucine from 2-oxobutanoate: step 2/4. Its pathway is amino-acid biosynthesis; L-valine biosynthesis; L-valine from pyruvate: step 2/4. Functionally, involved in the biosynthesis of branched-chain amino acids (BCAA). Catalyzes an alkyl-migration followed by a ketol-acid reduction of (S)-2-acetolactate (S2AL) to yield (R)-2,3-dihydroxy-isovalerate. In the isomerase reaction, S2AL is rearranged via a Mg-dependent methyl migration to produce 3-hydroxy-3-methyl-2-ketobutyrate (HMKB). In the reductase reaction, this 2-ketoacid undergoes a metal-dependent reduction by NADPH to yield (R)-2,3-dihydroxy-isovalerate. The protein is Ketol-acid reductoisomerase (NADP(+)) of Methanoregula boonei (strain DSM 21154 / JCM 14090 / 6A8).